Consider the following 135-residue polypeptide: Small ribosomal subunit protein uS12c (135 aa).

Belongs to the universal ribosomal protein uS12 family. In terms of assembly, part of the 30S ribosomal subunit.

Its subcellular location is the plastid. It is found in the chloroplast. Functionally, with S4 and S5 plays an important role in translational accuracy. Located at the interface of the 30S and 50S subunits. The sequence is that of Small ribosomal subunit protein uS12c (rps12) from Adiantum capillus-veneris (Maidenhair fern).